The sequence spans 431 residues: Divergent protein kinase domain 1B (431 aa).

At 1-30 (MRKLRRLVHMVLFCPISKGLQSRLPGIKVK) the chain is on the cytoplasmic side. Positions 5–6 (RR) match the May mediate ER retention motif. Residues 31–51 (YLFLAWLSVFVGSWVVYMHYS) form a helical membrane-spanning segment. At 52–431 (SYSELCRGHV…WKKISNTKYS (380 aa)) the chain is on the lumenal side. 2 disulfides stabilise this stretch: cysteine 57–cysteine 94 and cysteine 62–cysteine 117.

It belongs to the DIPK family. In terms of processing, among the many cysteines in the lumenal domain, most are probably involved in disulfide bonds.

Its subcellular location is the endoplasmic reticulum membrane. The chain is Divergent protein kinase domain 1B (dipk1b) from Xenopus tropicalis (Western clawed frog).